The sequence spans 333 residues: Flap endonuclease 1 (333 aa).

Positions 1–99 (MGVALREVLT…ETIESRREVR (99 aa)) are N-domain. Mg(2+) is bound by residues Asp-28, Asp-81, Glu-153, Glu-155, Asp-174, Asp-176, and Asp-235. Positions 117–256 (EAYKQARASS…TALKIVKKDG (140 aa)) are I-domain. An interaction with PCNA region spans residues 325–333 (GQKTLDRWF).

The protein belongs to the XPG/RAD2 endonuclease family. FEN1 subfamily. Interacts with PCNA. PCNA stimulates the nuclease activity without altering cleavage specificity. It depends on Mg(2+) as a cofactor.

In terms of biological role, structure-specific nuclease with 5'-flap endonuclease and 5'-3' exonuclease activities involved in DNA replication and repair. During DNA replication, cleaves the 5'-overhanging flap structure that is generated by displacement synthesis when DNA polymerase encounters the 5'-end of a downstream Okazaki fragment. Binds the unpaired 3'-DNA end and kinks the DNA to facilitate 5' cleavage specificity. Cleaves one nucleotide into the double-stranded DNA from the junction in flap DNA, leaving a nick for ligation. Also involved in the base excision repair (BER) pathway. Acts as a genome stabilization factor that prevents flaps from equilibrating into structures that lead to duplications and deletions. Also possesses 5'-3' exonuclease activity on nicked or gapped double-stranded DNA. This chain is Flap endonuclease 1, found in Methanosphaerula palustris (strain ATCC BAA-1556 / DSM 19958 / E1-9c).